An 872-amino-acid polypeptide reads, in one-letter code: Metabotropic glutamate receptor 2 (872 aa).

Residues 1–18 (MESLLGFLALLLLWGAVA) form the signal peptide. Over 19–567 (EGPAKKVLTL…QEYIRWGDAW (549 aa)) the chain is Extracellular. Cys50 and Cys92 form a disulfide bridge. Residues Arg57, Arg61, Ser145, Ala166, and Thr168 each coordinate L-glutamate. N-linked (GlcNAc...) asparagine glycosylation is found at Asn203 and Asn286. Disulfide bonds link Cys234/Cys518, Cys355/Cys362, Cys400/Cys407, Cys500/Cys519, Cys504/Cys522, Cys525/Cys537, and Cys540/Cys553. Asp295 is an L-glutamate binding site. N-linked (GlcNAc...) asparagine glycosylation is present at Asn338. Lys377 lines the L-glutamate pocket. Residue Asn402 is glycosylated (N-linked (GlcNAc...) asparagine). Asn547 is a glycosylation site (N-linked (GlcNAc...) asparagine). The helical transmembrane segment at 568–590 (AVGPVTIACLGALATLFVLGVFV) threads the bilayer. Residues 591-604 (RHNATPVVKASGRE) are Cytoplasmic-facing. Residues 605 to 625 (LCYILLGGVFLCYCMTFVFIA) traverse the membrane as a helical segment. The Extracellular portion of the chain corresponds to 626–636 (KPSTAVCTLRR). Cys632 and Cys721 are disulfide-bonded. The chain crosses the membrane as a helical span at residues 637-655 (LGLGTAFSVCYSALLTKTN). The Cytoplasmic segment spans residues 656–679 (RIARIFGGAREGAQRPRFISPASQ). Residues 677-685 (ASQVAICLA) form an important for interaction with HTR2A region. Residues 680–700 (VAICLALISGQLLIVAAWLVV) traverse the membrane as a helical segment. The Extracellular portion of the chain corresponds to 701–725 (EAPGTGKETAPERREVVTLRCNHRD). A helical transmembrane segment spans residues 726 to 747 (ASMLGSLAYNVLLIALCTLYAF). Over 748–760 (KTRKCPENFNEAK) the chain is Cytoplasmic. The helical transmembrane segment at 761 to 783 (FIGFTMYTTCIIWLAFLPIFYVT) threads the bilayer. At 784-793 (SSDYRVQTTT) the chain is on the extracellular side. Residues 794–819 (MCVSVSLSGSVVLGCLFAPKLHIILF) traverse the membrane as a helical segment. Topologically, residues 820–872 (QPQKNVVSHRAPTSRFGSAAPRASANLGQGSGSQFVPTVCNGREVVDSTTSSL) are cytoplasmic.

This sequence belongs to the G-protein coupled receptor 3 family. Forms heterodimers with GRM3 or GRM4. Interacts with GNAI1. Interacts with TAMALIN. Interacts with HTR2A. As to expression, is widely distributed in the CNS and prominent expression is seen in Golgi cells of the cerebellum and some particular neuronal cells in other brain regions.

It localises to the cell membrane. The protein localises to the synapse. Its subcellular location is the cell projection. It is found in the dendrite. In terms of biological role, dimeric G protein-coupled receptor which is activated by the excitatory neurotransmitter L-glutamate. Plays critical roles in modulating synaptic transmission and neuronal excitability. Upon activation by glutamate, inhibits presynaptic calcium channels, reducing further glutamate release and dampening excitatory signaling. Mechanistically, ligand binding causes a conformation change that triggers signaling via guanine nucleotide-binding proteins (G proteins) and modulates the activity of down-stream effectors, such as adenylate cyclase. May mediate suppression of neurotransmission or may be involved in synaptogenesis or synaptic stabilization. This is Metabotropic glutamate receptor 2 (Grm2) from Rattus norvegicus (Rat).